Reading from the N-terminus, the 419-residue chain is Odorant receptor 56a (419 aa).

Residues 1–41 (MFKVKDLLLSPTTFEDPIFGTHLRYFQWYGYVASKDQNRPL) lie on the Cytoplasmic side of the membrane. The chain crosses the membrane as a helical span at residues 42-62 (LSLIRCTILTASIWLSCALML). Over 63–76 (ARVFRGYENLNDGA) the chain is Extracellular. Residues 77–97 (TSYATAVQYFAVSIAMFNAYV) traverse the membrane as a helical segment. The Cytoplasmic segment spans residues 98–137 (QRDKVISLLRVAHSDIQNLMHEADNREMELLVATQAYTRT). A helical membrane pass occupies residues 138-158 (ITLLIWIPSVIAGLMAYSDCI). The Extracellular portion of the chain corresponds to 159 to 196 (YRSLFLPKSVFNVPAVRRGEEHPILLFQLFPFGELCDN). Residues 197-217 (FVVGYLGPWYALGLGITAIPL) traverse the membrane as a helical segment. The Cytoplasmic segment spans residues 218 to 292 (WHTFITCLMK…FVQELQYLIC (75 aa)). A helical transmembrane segment spans residues 293 to 313 (VPVMADFIIFSVLICFLFFAL). The Extracellular segment spans residues 314-323 (TVGVPSKMDY). A helical transmembrane segment spans residues 324–344 (FFMFIYLFVMAGILWIYHWHA). The Cytoplasmic portion of the chain corresponds to 345-389 (TLIVECHDELSLAYFSCGWYNFEMPLQKMLVFMMMHAQRPMKMRA). A helical membrane pass occupies residues 390–410 (LLVDLNLRTFIDIGRGAYSYF). Over 411 to 419 (NLLRSSHLY) the chain is Extracellular.

It belongs to the insect chemoreceptor superfamily. Heteromeric odorant receptor channel (TC 1.A.69) family. Or30a subfamily. As to quaternary structure, interacts with Orco. Complexes exist early in the endomembrane system in olfactory sensory neurons (OSNs), coupling these complexes to the conserved ciliary trafficking pathway. In terms of tissue distribution, expressed in olfactory sensory neurons in the antenna.

It localises to the cell membrane. In terms of biological role, odorant receptor which mediates acceptance or avoidance behavior, depending on its substrates. The odorant receptor repertoire encodes a large collection of odor stimuli that vary widely in identity, intensity, and duration. May form a complex with Orco to form odorant-sensing units, providing sensitive and prolonged odorant signaling and calcium permeability. Specific receptor for geosmin, a microbial odorant that constitutes an ecologically relevant stimulus that alerts flies to the presence of harmful microbes and induces avoidance behavior. The polypeptide is Odorant receptor 56a (Or56a) (Drosophila melanogaster (Fruit fly)).